A 314-amino-acid chain; its full sequence is tRNA dimethylallyltransferase (314 aa).

11 to 18 is an ATP binding site; it reads GPTGSGKT. Position 13 to 18 (13 to 18) interacts with substrate; the sequence is TGSGKT. The interaction with substrate tRNA stretch occupies residues 36–39; it reads DSMQ.

This sequence belongs to the IPP transferase family. Monomer. Mg(2+) serves as cofactor.

The catalysed reaction is adenosine(37) in tRNA + dimethylallyl diphosphate = N(6)-dimethylallyladenosine(37) in tRNA + diphosphate. Catalyzes the transfer of a dimethylallyl group onto the adenine at position 37 in tRNAs that read codons beginning with uridine, leading to the formation of N6-(dimethylallyl)adenosine (i(6)A). The chain is tRNA dimethylallyltransferase from Chlamydia trachomatis serovar D (strain ATCC VR-885 / DSM 19411 / UW-3/Cx).